We begin with the raw amino-acid sequence, 481 residues long: Glutamine synthetase (481 aa).

Positions 22-106 (NEVEFVDFRF…VFCDVYDVYK (85 aa)) constitute a GS beta-grasp domain. The 368-residue stretch at 114-481 (PRSIAKKALQ…PFEFITTYSC (368 aa)) folds into the GS catalytic domain. Mg(2+)-binding residues include glutamate 139, glutamate 141, glutamate 223, and glutamate 230. L-glutamate is bound by residues 274 to 275 (NG) and glycine 275. Histidine 279 provides a ligand contact to Mg(2+). ATP is bound by residues 281-283 (HVS) and serine 283. L-glutamate contacts are provided by arginine 331, glutamate 337, and arginine 349. Residues arginine 349 and arginine 354 each coordinate ATP. Mg(2+) is bound at residue glutamate 367. Arginine 369 is a binding site for L-glutamate.

It belongs to the glutamine synthetase family. In terms of assembly, oligomer of 12 subunits arranged in the form of two hexameric ring. Mg(2+) serves as cofactor.

Its subcellular location is the cytoplasm. The enzyme catalyses L-glutamate + NH4(+) + ATP = L-glutamine + ADP + phosphate + H(+). Its activity is regulated as follows. The activity of this enzyme could be controlled by adenylation under conditions of abundant glutamine. Its function is as follows. Catalyzes the ATP-dependent biosynthesis of glutamine from glutamate and ammonia. The chain is Glutamine synthetase from Helicobacter pylori (strain ATCC 700392 / 26695) (Campylobacter pylori).